We begin with the raw amino-acid sequence, 428 residues long: Acylglycerol kinase, mitochondrial (428 aa).

Residues 18 to 34 (STVGFCLLAYGSHWLYG) are hydrophobic. The region spanning 61-202 (SAIKKATVFL…LDVLQIKGEQ (142 aa)) is the DAGKc domain.

This sequence belongs to the AGK family. Component of the TIM22 complex. The cofactor is Mg(2+).

It is found in the mitochondrion inner membrane. It localises to the mitochondrion intermembrane space. The catalysed reaction is a monoacylglycerol + ATP = a monoacyl-sn-glycero-3-phosphate + ADP + H(+). The enzyme catalyses a 1,2-diacyl-sn-glycerol + ATP = a 1,2-diacyl-sn-glycero-3-phosphate + ADP + H(+). It catalyses the reaction an N-acylsphing-4-enine + ATP = an N-acylsphing-4-enine 1-phosphate + ADP + H(+). It carries out the reaction 1-(9Z-octadecenoyl)-sn-glycerol + ATP = 1-(9Z-octadecenoyl)-sn-glycero-3-phosphate + ADP + H(+). The catalysed reaction is 1,2-di-(9Z-octadecenoyl)-sn-glycerol + ATP = 1,2-di-(9Z-octadecenoyl)-sn-glycero-3-phosphate + ADP + H(+). The enzyme catalyses a 1-acyl-sn-glycerol + ATP = a 1-acyl-sn-glycero-3-phosphate + ADP + H(+). It catalyses the reaction 1-hexadecanoyl-sn-glycerol + ATP = 1-hexadecanoyl-sn-glycero-3-phosphate + ADP + H(+). It carries out the reaction a 2-acylglycerol + ATP = a 2-acyl-sn-glycerol 3-phosphate + ADP + H(+). The catalysed reaction is 2-(5Z,8Z,11Z,14Z-eicosatetraenoyl)-glycerol + ATP = 2-(5Z,8Z,11Z,14Z-eicosatetraenoyl)-sn-glycero-3-phosphate + ADP + H(+). The enzyme catalyses 1-(5Z,8Z,11Z,14Z-eicosatetraenoyl)-sn-glycerol + ATP = 1-(5Z,8Z,11Z,14Z-eicosatetraenoyl)-sn-glycero-3-phosphate + ADP + H(+). It catalyses the reaction N-(hexanoyl)sphing-4-enine + ATP = N-hexanoylsphing-4-enine 1-phosphate + ADP + H(+). The protein operates within lipid metabolism; glycerolipid metabolism. Its function is as follows. Lipid kinase that can phosphorylate both monoacylglycerol and diacylglycerol to form lysophosphatidic acid (LPA) and phosphatidic acid (PA), respectively. Phosphorylates ceramide but not sphingosine. Phosphorylates 1,2-dioleoylglycerol more rapidly than 2,3-dioleoylglycerol. Independently of its lipid kinase activity, acts as a component of the TIM22 complex. The TIM22 complex mediates the import and insertion of multi-pass transmembrane proteins into the mitochondrial inner membrane by forming a twin-pore translocase that uses the membrane potential as the external driving force. In Xenopus laevis (African clawed frog), this protein is Acylglycerol kinase, mitochondrial.